Here is a 345-residue protein sequence, read N- to C-terminus: Chorismate synthase (345 aa).

The protein belongs to the chorismate synthase family. As to quaternary structure, homotetramer. FMNH2 is required as a cofactor.

It carries out the reaction 5-O-(1-carboxyvinyl)-3-phosphoshikimate = chorismate + phosphate. Its pathway is metabolic intermediate biosynthesis; chorismate biosynthesis; chorismate from D-erythrose 4-phosphate and phosphoenolpyruvate: step 7/7. The sequence is that of Chorismate synthase (aroC) from Carsonella ruddii (strain PV).